The following is a 208-amino-acid chain: NAD(P)H-quinone oxidoreductase subunit I (208 aa).

4Fe-4S ferredoxin-type domains lie at 55–84 (GRIH…VDWV) and 95–124 (RNYS…MTEE). [4Fe-4S] cluster contacts are provided by Cys-64, Cys-67, Cys-70, Cys-74, Cys-104, Cys-107, Cys-110, and Cys-114.

The protein belongs to the complex I 23 kDa subunit family. NDH-1 is composed of at least 11 different subunits. It depends on [4Fe-4S] cluster as a cofactor.

The protein localises to the cellular thylakoid membrane. The enzyme catalyses a plastoquinone + NADH + (n+1) H(+)(in) = a plastoquinol + NAD(+) + n H(+)(out). The catalysed reaction is a plastoquinone + NADPH + (n+1) H(+)(in) = a plastoquinol + NADP(+) + n H(+)(out). Its function is as follows. NDH-1 shuttles electrons from an unknown electron donor, via FMN and iron-sulfur (Fe-S) centers, to quinones in the respiratory and/or the photosynthetic chain. The immediate electron acceptor for the enzyme in this species is believed to be plastoquinone. Couples the redox reaction to proton translocation, and thus conserves the redox energy in a proton gradient. This is NAD(P)H-quinone oxidoreductase subunit I from Prochlorococcus marinus (strain MIT 9515).